The sequence spans 33 residues: Kappa-sparatoxin-Hv1a (33 aa).

Intrachain disulfides connect Cys-2/Cys-17, Cys-9/Cys-22, and Cys-16/Cys-27. Trp-33 is modified (tryptophan amide).

As to expression, expressed by the venom gland.

It is found in the secreted. Its function is as follows. Blocks transient outward voltage-gated potassium channels in rat ventricular myocytes (thus prolonging action-potential duration) and rat Kv4.2/KCNA4 channels expressed in Xenopus oocytes. Is also a weak blocker of calcium channels in rat cerebellar granule cells. This chain is Kappa-sparatoxin-Hv1a, found in Heteropoda venatoria (Brown huntsman spider).